We begin with the raw amino-acid sequence, 800 residues long: General transcription and DNA repair factor IIH helicase/translocase subunit XPB (800 aa).

Positions 1 to 27 (MSSGDSNLKRRRGGNTGQSSKSYNTWT) are disordered. Polar residues predominate over residues 17 to 27 (GQSSKSYNTWT). Positions 329-491 (MFGNGRARSG…DLNFLIGPKL (163 aa)) constitute a Helicase ATP-binding domain. An ATP-binding site is contributed by 342 to 349 (LPCGAGKS). The DEVH box motif lies at 444 to 447 (DEVH). Residues 546-704 (RACEYLIRFH…ELPGIDQEVN (159 aa)) form the Helicase C-terminal domain. The interval 743-769 (GAKKSKSSAPTVSRTTGGSTRALSGGN) is disordered. Residues 749–764 (SSAPTVSRTTGGSTRA) are compositionally biased toward polar residues.

The protein belongs to the helicase family. RAD25/XPB subfamily. As to quaternary structure, component of the 7-subunit TFIIH core complex composed of XPB/repB, XPD/repD, gtf2h1, gtf2h2, gtf2h3, gtf2h4 and gtf2h5, which is active in NER. The core complex associates with the 3-subunit CDK-activating kinase (CAK) module composed of cycH/cyclin H, cdk7 and mnat1 to form the 10-subunit holoenzyme (holo-TFIIH) active in transcription.

It localises to the nucleus. The enzyme catalyses Couples ATP hydrolysis with the unwinding of duplex DNA by translocating in the 3'-5' direction.. It catalyses the reaction ATP + H2O = ADP + phosphate + H(+). Functionally, ATP-dependent 3'-5' DNA helicase/translocase; binds dsDNA rather than ssDNA, unzipping it in a translocase rather than classical helicase activity. Component of the general transcription and DNA repair factor IIH (TFIIH) core complex. When complexed to CDK-activating kinase (CAK), involved in RNA transcription by RNA polymerase II. The ATPase activity of XPB/ERCC3, but not its helicase activity, is required for DNA opening; it may wrap around the damaged DNA wedging it open, causing localized melting and twisting that allows XPD/ERCC2 helicase to anchor. The ATP-dependent helicase activity of XPB/ERCC3 may be required for promoter escape. Also involved in transcription-coupled nucleotide excision repair (NER) of damaged DNA. In NER, TFIIH acts by opening DNA around the lesion to allow the excision of the damaged oligonucleotide and its replacement by a new DNA fragment. The structure of the TFIIH transcription complex differs from the NER-TFIIH complex. The chain is General transcription and DNA repair factor IIH helicase/translocase subunit XPB from Dictyostelium discoideum (Social amoeba).